Reading from the N-terminus, the 98-residue chain is Small ribosomal subunit protein bS20 (98 aa).

Belongs to the bacterial ribosomal protein bS20 family.

In terms of biological role, binds directly to 16S ribosomal RNA. This chain is Small ribosomal subunit protein bS20, found in Synechococcus sp. (strain CC9902).